Consider the following 92-residue polypeptide: Small ribosomal subunit protein uS19 (92 aa).

Belongs to the universal ribosomal protein uS19 family.

Functionally, protein S19 forms a complex with S13 that binds strongly to the 16S ribosomal RNA. This is Small ribosomal subunit protein uS19 from Roseobacter denitrificans (strain ATCC 33942 / OCh 114) (Erythrobacter sp. (strain OCh 114)).